The primary structure comprises 161 residues: Nucleotide-binding protein RSc2549 (161 aa).

This sequence belongs to the YajQ family.

Functionally, nucleotide-binding protein. The protein is Nucleotide-binding protein RSc2549 of Ralstonia nicotianae (strain ATCC BAA-1114 / GMI1000) (Ralstonia solanacearum).